We begin with the raw amino-acid sequence, 608 residues long: Protein FAM151A (608 aa).

The helical transmembrane segment at 14-34 threads the bilayer; it reads WILAGSVTVTLVLAISLILGL. Positions 586 to 596 are enriched in polar residues; the sequence is VSSNRPSSRIG. The segment at 586-608 is disordered; that stretch reads VSSNRPSSRIGPSSVEGFPGESR.

The protein belongs to the menorin family.

Its subcellular location is the membrane. The polypeptide is Protein FAM151A (Fam151a) (Mus musculus (Mouse)).